Reading from the N-terminus, the 315-residue chain is Probable cytochrome c oxidase subunit 2 (315 aa).

The region spanning 6-53 is the RPE1 insert domain; the sequence is RHLSKPAYREEFKGDTSPRTAAYISNRADASLGSTYKLPLEAKFWKMS. Helical transmembrane passes span 41–61, 96–116, and 133–153; these read YKLP…CFLI, LLYI…FVCI, and VLIE…IAVP. Cu cation-binding residues include His-235, Cys-270, Cys-274, and His-278.

This sequence belongs to the cytochrome c oxidase subunit 2 family. Cu cation is required as a cofactor. Requires heme as cofactor.

The protein localises to the cell membrane. The enzyme catalyses 4 Fe(II)-[cytochrome c] + O2 + 8 H(+)(in) = 4 Fe(III)-[cytochrome c] + 2 H2O + 4 H(+)(out). Subunits I and II form the functional core of the enzyme complex. Electrons originating in cytochrome c are transferred via heme a and Cu(A) to the binuclear center formed by heme a3 and Cu(B). This Rickettsia felis (strain ATCC VR-1525 / URRWXCal2) (Rickettsia azadi) protein is Probable cytochrome c oxidase subunit 2 (ctaC).